Consider the following 655-residue polypeptide: MGIFSIANQHIRFAVKLACAIVLALFIGFHFQLETPRWAVLTAAIVAAGPAFAAGGEPYSGAIRYRGMLRIIGTFIGCIAALIIIISMIRAPLLMILVCCVWAGFCTWISSLVRIENSYAWGLSGYTALIIVITIQTEPLLTPQFALERCSEIVIGIGCAILADLLFSPRSIKQEVDRELDSLLVAQYQLMQLCIKHGDSEEVDNAWGDLVRRTAALEGMRSNLNMESSRWVRANRRLKALNTLSLTLITQSCETYLIQNTRPELITDTFRELFETPVETVQDVHRQLKRMRRVIVWTGERETPVTLYSWVGAATRYLLLKRGVISNTKISATEEEILQGEPVVKVESAERHHAMVNFWRTTLSCILGTLFWLWTGWTSGNGAMVMIAVVTSLAMRLPNPRMVCIDFIYGTLAALPLGLLYFLVIIPNTQQSMLLLCLSLAVLGFFIGIEVQKRRLGSMGALASTINIIVLDNPMTFHFSQFLDSALGQIVGCMLAFIVILLVRDKSKDRTGRVLLNQFVSAAVSAMTTNVVRRKENRLPALYQQLFLLMNKFPGDLPKFRLALTMIIAHQRLRDAPIPVNEDLSVFHRQLRRTADHVISAGSDDKRRRYFGQLLDELDIYQEKLRIWEAPTQVTEPVKRLTGMLHKYQNALTDS.

11 helical membrane passes run 13-33, 38-58, 69-89, 93-113, 121-141, 152-172, 370-390, 407-427, 431-451, 459-479, and 482-502; these read FAVK…HFQL, WAVL…GGEP, LRII…ISMI, LLMI…SSLV, WGLS…EPLL, EIVI…PRSI, LFWL…IAVV, FIYG…VIIP, QSML…GIEV, MGAL…TFHF, and FLDS…VILL.

Belongs to the aromatic acid exporter ArAE (TC 2.A.85) family.

It localises to the cell inner membrane. Forms an efflux pump with AaeA. Could function as a metabolic relief valve, allowing to eliminate certain compounds when they accumulate to high levels in the cell. This is p-hydroxybenzoic acid efflux pump subunit AaeB from Salmonella enteritidis PT4 (strain P125109).